Here is a 191-residue protein sequence, read N- to C-terminus: Ribosomal RNA large subunit methyltransferase E (191 aa).

S-adenosyl-L-methionine-binding residues include glycine 49, tryptophan 51, aspartate 66, aspartate 82, and aspartate 105. The active-site Proton acceptor is lysine 145.

This sequence belongs to the class I-like SAM-binding methyltransferase superfamily. RNA methyltransferase RlmE family.

Its subcellular location is the cytoplasm. The catalysed reaction is uridine(2552) in 23S rRNA + S-adenosyl-L-methionine = 2'-O-methyluridine(2552) in 23S rRNA + S-adenosyl-L-homocysteine + H(+). In terms of biological role, specifically methylates the uridine in position 2552 of 23S rRNA at the 2'-O position of the ribose in the fully assembled 50S ribosomal subunit. The protein is Ribosomal RNA large subunit methyltransferase E of Archaeoglobus fulgidus (strain ATCC 49558 / DSM 4304 / JCM 9628 / NBRC 100126 / VC-16).